The sequence spans 278 residues: Hydroxyethylthiazole kinase (278 aa).

Methionine 48 contributes to the substrate binding site. 2 residues coordinate ATP: arginine 124 and threonine 175. Residue glycine 202 participates in substrate binding.

It belongs to the Thz kinase family. Mg(2+) is required as a cofactor.

The catalysed reaction is 5-(2-hydroxyethyl)-4-methylthiazole + ATP = 4-methyl-5-(2-phosphooxyethyl)-thiazole + ADP + H(+). The protein operates within cofactor biosynthesis; thiamine diphosphate biosynthesis; 4-methyl-5-(2-phosphoethyl)-thiazole from 5-(2-hydroxyethyl)-4-methylthiazole: step 1/1. Catalyzes the phosphorylation of the hydroxyl group of 4-methyl-5-beta-hydroxyethylthiazole (THZ). This Clostridium botulinum (strain Alaska E43 / Type E3) protein is Hydroxyethylthiazole kinase.